Reading from the N-terminus, the 61-residue chain is Small ribosomal subunit protein uS14B (61 aa).

Residues cysteine 24, cysteine 27, cysteine 40, and cysteine 43 each contribute to the Zn(2+) site.

This sequence belongs to the universal ribosomal protein uS14 family. Zinc-binding uS14 subfamily. In terms of assembly, part of the 30S ribosomal subunit. Contacts proteins S3 and S10. Requires Zn(2+) as cofactor.

Functionally, binds 16S rRNA, required for the assembly of 30S particles and may also be responsible for determining the conformation of the 16S rRNA at the A site. This chain is Small ribosomal subunit protein uS14B, found in Bacillus licheniformis (strain ATCC 14580 / DSM 13 / JCM 2505 / CCUG 7422 / NBRC 12200 / NCIMB 9375 / NCTC 10341 / NRRL NRS-1264 / Gibson 46).